A 526-amino-acid chain; its full sequence is Outer capsid protein VP5 (526 aa).

Positions 1-42 (MGKIIKSLSRFGKKVGNALTSNTAKKIYNTIGKAAERFAESE) are involved in membrane permeabilization.

The protein belongs to the orbivirus VP5 family.

It localises to the virion. Its function is as follows. VP5 protein is one of the two proteins (with VP2) which constitute the virus particle outer capsid. Acts as a membrane permeabilization protein that mediates release of viral particles from endosomal compartments into the cytoplasm. Permeabilization activity is probably negatively regulated by VP2 and is triggered by endosomal degradation of VP2 and exposure to low pH. The sequence is that of Outer capsid protein VP5 (Segment-6) from Bluetongue virus 13 (isolate USA) (BTV 13).